A 117-amino-acid polypeptide reads, in one-letter code: Large ribosomal subunit protein bL20 (117 aa).

It belongs to the bacterial ribosomal protein bL20 family.

Its function is as follows. Binds directly to 23S ribosomal RNA and is necessary for the in vitro assembly process of the 50S ribosomal subunit. It is not involved in the protein synthesizing functions of that subunit. This Helicobacter hepaticus (strain ATCC 51449 / 3B1) protein is Large ribosomal subunit protein bL20.